Consider the following 266-residue polypeptide: ATP synthase subunit a (266 aa).

Transmembrane regions (helical) follow at residues 41-61 (IDTL…FWLA), 98-118 (VIAP…LMDL), 119-139 (VPID…WKIL), 152-172 (LSVL…GGWL), 178-198 (HPLG…EFIA), 216-236 (LVFI…GTPW), and 237-257 (AIFH…LTVV).

This sequence belongs to the ATPase A chain family. F-type ATPases have 2 components, CF(1) - the catalytic core - and CF(0) - the membrane proton channel. CF(1) has five subunits: alpha(3), beta(3), gamma(1), delta(1), epsilon(1). CF(0) has three main subunits: a(1), b(2) and c(9-12). The alpha and beta chains form an alternating ring which encloses part of the gamma chain. CF(1) is attached to CF(0) by a central stalk formed by the gamma and epsilon chains, while a peripheral stalk is formed by the delta and b chains.

The protein resides in the cell inner membrane. Its function is as follows. Key component of the proton channel; it plays a direct role in the translocation of protons across the membrane. In Halorhodospira halophila (strain DSM 244 / SL1) (Ectothiorhodospira halophila (strain DSM 244 / SL1)), this protein is ATP synthase subunit a.